Consider the following 78-residue polypeptide: Large ribosomal subunit protein bL28 (78 aa).

This sequence belongs to the bacterial ribosomal protein bL28 family.

The sequence is that of Large ribosomal subunit protein bL28 from Prochlorococcus marinus (strain MIT 9301).